The following is a 494-amino-acid chain: MDKYGHIAHQEGDVCYYIPRLFKYNSYYSGTEDVRIFVGDLKYRMRVSLQICEKYYDRRLSMLFWKNHPLQQIHLIGCIIGLQFKWIGKQEYIFFQLDDCTSDSSLVGYTSDMRFLTCKVKKDSILSWGLNITDLIGLTLHVYGQASLNYQELQVEYLRLCYSLTEEIDHWKITMNMREQLDTPWSLSDFVIGELFTQEQEWTPETSQIEVVNPDFVGIGYKTPESKRNETTFIEQLQEERLKDELEIISPYNSTDTSNSVHSLSFRFVSSLKDFPETHFLNSGDQIDNGNDEQLKKLEYQSANLPVMIPNRTSAKSNLMLILLGLQMKEISNSDLYKLKEVRSVVTSLASFLFQQQNVGVMKSFDSLEKEAFRDLVNRLVSQGLIGLKDKTSETFDLLPLKNLFEYAEKRISVLMKLQCYTGTVQLSHVQEKLHLPYITTNGIVDVFKECLKRTKKQYPEVLKNWWIDLDPKNGMEDQNSGILLHLEYAAAYS.

Residues 62-159 (MLFWKNHPLQ…YQELQVEYLR (98 aa)) constitute a DNA-binding region (OB). Winged helix-turn-helix (wHTH) regions lie at residues 311 to 397 (NRTS…ETFD) and 396 to 494 (FDLL…AAYS).

In terms of assembly, interacts with CDC13 and TEN1.

The protein resides in the chromosome. Its subcellular location is the telomere. Functionally, has a role in telomere length regulation and telomere end protection. Acts as an inhibitor of telomerase loading through its interaction with CDC13. This is Protein STN1 (STN1) from Saccharomyces cerevisiae (strain ATCC 204508 / S288c) (Baker's yeast).